Consider the following 428-residue polypeptide: Pregnancy-specific beta-1-glycoprotein 3 (428 aa).

An N-terminal signal peptide occupies residues 1–34; the sequence is MGPLSAPPCTQRITWKGLLLTALLLNFWNLPTTA. An Ig-like V-type domain is found at 35–144; the sequence is QVTIEAEPTK…TGHFTFTLYL (110 aa). N-linked (GlcNAc...) asparagine glycosylation is found at Asn-104 and Asn-111. The Cell attachment site motif lies at 127-129; it reads RGD. Ig-like C2-type domains lie at 147–234, 240–327, and 335–410; these read PKPS…VTLN, PKPY…VTLN, and PRIY…KSMT. 3 cysteine pairs are disulfide-bonded: Cys-169/Cys-217, Cys-262/Cys-310, and Cys-354/Cys-394. 2 N-linked (GlcNAc...) asparagine glycosylation sites follow: Asn-268 and Asn-303.

It belongs to the immunoglobulin superfamily. CEA family.

Its subcellular location is the secreted. The chain is Pregnancy-specific beta-1-glycoprotein 3 (PSG3) from Homo sapiens (Human).